Reading from the N-terminus, the 295-residue chain is G1/S-specific cyclin-D1 (295 aa).

The Cyclin N-terminal domain maps to 28-152 (LRAMLKAEET…LLVNKLKWNL (125 aa)). A disordered region spans residues 262-295 (AQQNMDPKAAEEEEEEEEEVDLACTPTDVRDVDI). Residue Lys269 forms a Glycyl lysine isopeptide (Lys-Gly) (interchain with G-Cter in ubiquitin) linkage. Acidic residues predominate over residues 272–282 (EEEEEEEEEVD). Thr286 bears the Phosphothreonine mark.

This sequence belongs to the cyclin family. Cyclin D subfamily. In terms of assembly, interacts with either CDK4 or CDK6 protein kinase to form a serine/threonine kinase holoenzyme complex. The cyclin subunit imparts substrate specificity to the complex. Component of the ternary complex CCND1/CDK4/CDKN1B required for nuclear translocation and modulation of CDK4-mediated kinase activity. Interacts directly with CDKN1B. Can form similar complexes with either CDKN1A or CDKN2A. Interacts with UHRF2; the interaction ubiquitinates CCND1 and appears to occur independently of phosphorylation. Interacts with USP2. Interacts (via cyclin N-terminal domain) with INSM1 (via N-terminal region); the interaction competes with the binding of CCND1 to CDK4 during cell cycle progression and inhibits CDK4 activity. Interacts with CDK4; the interaction is prevented with the binding of CCND1 to INSM1 during cell cycle progression. Phosphorylation at Thr-286 by MAP kinases is required for ubiquitination and degradation by the DCX(AMBRA1) complex. It also plays an essential role for recognition by the FBXO31 component of SCF (SKP1-cullin-F-box) protein ligase complex following DNA damage. In terms of processing, ubiquitinated at Lys-269 by the DCX(AMBRA1) complex during the transition from G1 to S cell phase, leading to its degradation: ubiquitination is dependent on Thr-286 phosphorylation. The DCX(AMBRA1) complex represents the major regulator of CCND1 stability during the G1/S transition. Also ubiquitinated by the SCF(FBXO4) and Cul7-RING(FBXW8) ubiquitin-protein ligase complexes. Following DNA damage it is ubiquitinated by the SCF(FBXO31) protein ligase complex. SCF(FBXO31) ubiquitination is dependent on Thr-286 phosphorylation. Ubiquitinated also by UHRF2 apparently in a phosphorylation-independent manner. Ubiquitination leads to its degradation and G1 arrest. Deubiquitinated by USP2; leading to its stabilization.

The protein resides in the nucleus. The protein localises to the cytoplasm. Its subcellular location is the nucleus membrane. In terms of biological role, regulatory component of the cyclin D1-CDK4 (DC) complex that phosphorylates and inhibits members of the retinoblastoma (RB) protein family including RB1 and regulates the cell-cycle during G(1)/S transition. Phosphorylation of RB1 allows dissociation of the transcription factor E2F from the RB/E2F complex and the subsequent transcription of E2F target genes which are responsible for the progression through the G(1) phase. Hypophosphorylates RB1 in early G(1) phase. Cyclin D-CDK4 complexes are major integrators of various mitogenenic and antimitogenic signals. Also a substrate for SMAD3, phosphorylating SMAD3 in a cell-cycle-dependent manner and repressing its transcriptional activity. Component of the ternary complex, cyclin D1/CDK4/CDKN1B, required for nuclear translocation and activity of the cyclin D-CDK4 complex. Exhibits transcriptional corepressor activity with INSM1 on the NEUROD1 and INS promoters in a cell cycle-independent manner. This chain is G1/S-specific cyclin-D1, found in Homo sapiens (Human).